Here is a 46-residue protein sequence, read N- to C-terminus: uncharacterized protein (46 aa).

The protein localises to the mitochondrion. This is an uncharacterized protein from Saccharomyces cerevisiae (strain ATCC 204508 / S288c) (Baker's yeast).